The following is a 1044-amino-acid chain: Integrin alpha-V (1044 aa).

Positions 1–30 are cleaved as a signal peptide; the sequence is MAAPGRLLLRPRPGGLLLLLPGLLLPLADA. The Extracellular portion of the chain corresponds to 31-988; the sequence is FNLDVESPAE…WGIQPAPMPV (958 aa). 7 FG-GAP repeats span residues 32–98, 109–170, 173–225, 237–291, 292–357, 358–415, and 419–482; these read NLDV…RRCQ, DYAK…VEYA, RSKN…ISKY, QLAT…GKNM, SSLH…GDFQ, TTKL…GLNS, and QILE…VYPS. Residue Asn74 is glycosylated (N-linked (GlcNAc...) asparagine). Disulfide bonds link Cys89–Cys97, Cys138–Cys158, and Cys172–Cys185. The Ca(2+) site is built by Asp260, Asn262, Asp264, Ile266, and Asp268. N-linked (GlcNAc...) asparagine glycosylation is found at Asn290 and Asn296. Ca(2+) is bound by residues Asp314, Asn316, Asp318, Tyr320, Asp322, Asp379, Asp381, Asp383, Phe385, Asp387, Asp443, Asp445, Asn447, Tyr449, and Asp451. Intrachain disulfides connect Cys491–Cys502 and Cys508–Cys565. The N-linked (GlcNAc...) asparagine glycan is linked to Asn615. Intrachain disulfides connect Cys626–Cys632 and Cys698–Cys711. Residues Asn704, Asn835, Asn851, and Asn869 are each glycosylated (N-linked (GlcNAc...) asparagine). Intrachain disulfides connect Cys852–Cys910 and Cys900–Cys905. Asn941, Asn969, and Asn976 each carry an N-linked (GlcNAc...) asparagine glycan. Residues 989–1012 traverse the membrane as a helical segment; it reads PVWVIILAVLAGLLLLAVLVFVMY. Residues 1013 to 1044 lie on the Cytoplasmic side of the membrane; that stretch reads RMGFFKRVRPPQEEQEREQLQPHENGEGNSET. A GFFKR motif motif is present at residues 1015–1019; sequence GFFKR. Basic and acidic residues predominate over residues 1023-1038; that stretch reads PQEEQEREQLQPHENG. The disordered stretch occupies residues 1023-1044; that stretch reads PQEEQEREQLQPHENGEGNSET.

The protein belongs to the integrin alpha chain family. As to quaternary structure, heterodimer of an alpha and a beta subunit. The alpha subunit is composed of a heavy and a light chain linked by a disulfide bond. Alpha-V (ITGAV) associates with either beta-1 (ITGB1), beta-3 (ITGB3), beta-5 (ITGB5), beta-6 (ITGB6) or beta-8 (ITGB8). Interacts with RAB25. Interacts with CIB1. Integrins ITGAV:ITGB3 and ITGAV:ITGB5 interact with FBLN5 (via N-terminus). ITGAV:ITGB3 and ITGAV:ITGB5 interact with CCN3. ITGAV:ITGB3 interacts with ADGRA2. ITGAV:ITGB3 interacts with FGF2; it is likely that FGF2 can simultaneously bind ITGAV:ITGB3 and FGF receptors. ITGAV:ITGB3 interacts with SELP (via C-type lectin domain); the interaction mediates cell-cell interaction and adhesion. ITGAV:ITGB3 is found in a ternary complex with CX3CR1 and CX3CL1. ITGAV:ITGB3 is found in a ternary complex with NRG1 and ERBB3. ITGAV:ITGB3 is found in a ternary complex with FGF1 and FGFR1. ITGAV:ITGB3 is found in a ternary complex with IGF1 and IGF1R. ITGAV:ITGB3 interacts with IGF2. ITGAV:ITGB3 and ITGAV:ITGB6 interact with FBN1. ITGAV:ITGB3 interacts with CD9, CD81 and CD151 (via second extracellular domain). ITGAV:ITGB6 interacts with TGFB1. ITGAV:ITGB3 interacts with PTN. Forms a complex with PTPRZ1 and PTN that stimulates endothelial cell migration through ITGB3 'Tyr-773' phosphorylation. Interacts with TM4SF19.

Its subcellular location is the cell membrane. The protein resides in the cell junction. The protein localises to the focal adhesion. In terms of biological role, the alpha-V (ITGAV) integrins are receptors for vitronectin, cytotactin, fibronectin, fibrinogen, laminin, matrix metalloproteinase-2, osteopontin, osteomodulin, prothrombin, thrombospondin, TGFB1 and vWF. They recognize the sequence R-G-D in a wide array of ligands. Alpha-V integrins may play a role in embryo implantation, angiogenesis and wound healing. ITGAV:ITGB3 binds to fractalkine (CX3CL1) and may act as its coreceptor in CX3CR1-dependent fractalkine signaling. ITGAV:ITGB3 binds to NRG1 (via EGF domain) and this binding is essential for NRG1-ERBB signaling. ITGAV:ITGB3 binds to FGF1 and this binding is essential for FGF1 signaling. ITGAV:ITGB3 binds to FGF2 and this binding is essential for FGF2 signaling. ITGAV:ITGB3 binds to IGF1 and this binding is essential for IGF1 signaling. ITGAV:ITGB3 binds to IGF2 and this binding is essential for IGF2 signaling. ITGAV:ITGB3 binds to IL1B and this binding is essential for IL1B signaling. ITGAV:ITGB3 binds to PLA2G2A via a site (site 2) which is distinct from the classical ligand-binding site (site 1) and this induces integrin conformational changes and enhanced ligand binding to site 1. ITGAV:ITGB3 and ITGAV:ITGB6 act as a receptor for fibrillin-1 (FBN1) and mediate R-G-D-dependent cell adhesion to FBN1. Integrin alpha-V/beta-6 or alpha-V/beta-8 (ITGAV:ITGB6 or ITGAV:ITGB8) mediates R-G-D-dependent release of transforming growth factor beta-1 (TGF-beta-1) from regulatory Latency-associated peptide (LAP), thereby playing a key role in TGF-beta-1 activation. ITGAV:ITGB3 acts as a receptor for CD40LG. ITGAV:ITGB3 binds to the Lilrb4a/Gp49b receptor and enhances the Lilrb4a-mediated inhibition of mast cell activation. ITGAV:ITGB3 also suppresses marginal zone B cell antibody production through its interaction with Lilrb4a. ITGAV:ITGB3 acts as a receptor for IBSP and promotes cell adhesion and migration to IBSP. The sequence is that of Integrin alpha-V (Itgav) from Mus musculus (Mouse).